The sequence spans 464 residues: Glucan 1,3-beta-glucosidase 3 (464 aa).

This sequence belongs to the glycosyl hydrolase 5 (cellulase A) family.

The catalysed reaction is Successive hydrolysis of beta-D-glucose units from the non-reducing ends of (1-&gt;3)-beta-D-glucans, releasing alpha-glucose.. The sequence is that of Glucan 1,3-beta-glucosidase 3 (exg3) from Schizosaccharomyces pombe (strain 972 / ATCC 24843) (Fission yeast).